Reading from the N-terminus, the 346-residue chain is Calcium homeostasis modulator protein 1 (346 aa).

The Cytoplasmic portion of the chain corresponds to 1–21; that stretch reads MMDKFRMIFQFLQSNQESFMN. Residues 10 to 37 form a central pore region; sequence QFLQSNQESFMNGICGIMALASAQMYSA. Residues 22 to 37 form a helical membrane-spanning segment; it reads GICGIMALASAQMYSA. Residues 38-49 lie on the Extracellular side of the membrane; sequence FDFNCPCLPGYN. Disulfide bonds link cysteine 42-cysteine 127 and cysteine 44-cysteine 161. Residues 50-72 traverse the membrane as a helical segment; that stretch reads AAYSAGILLAPPLVLFLLGLVMN. The segment at 63–70 is phospholipid-binding; it reads VLFLLGLV. The Cytoplasmic portion of the chain corresponds to 73–99; that stretch reads NNVSMLAEEWKRPLGRRAKDPAVLRYM. A helical transmembrane segment spans residues 100 to 125; the sequence is FCSMAQRALIAPVVWVAVTLLDGKCF. Cysteine 101 carries S-palmitoyl cysteine lipidation. A phospholipid-binding region spans residues 105-117; sequence QRALIAPVVWVAV. The Extracellular portion of the chain corresponds to 126–180; it reads LCAFCTAVPVSALGNGSLAPGLPAPELARLLARVPCPEIYDGDWLLAREVAVRYL. N-linked (GlcNAc...) asparagine glycosylation is present at asparagine 140. The helical transmembrane segment at 181-206 threads the bilayer; the sequence is RCISQALGWSFVLLTTLLAFVVRSVR. Positions 192 to 202 are phospholipid-binding; it reads VLLTTLLAFVV. The Cytoplasmic portion of the chain corresponds to 207–346; it reads PCFTQAAFLK…KEVATYFSKV (140 aa). Cysteine 208 is lipidated: S-palmitoyl cysteine. The disordered stretch occupies residues 313 to 346; the sequence is LRLGQEEPPLMGNGWAGGGPRPPRKEVATYFSKV.

Belongs to the CALHM family. Oligomerizes to form hexamers and octamers. Does not form gap junctions. Associates with CALHM3 as a pore-forming subunit in a hetero-hexameric channel complex. In terms of processing, N-glycosylated. Assembly with CALHM3 is associated with N-glycan remodeling and formation of hybrid complex- and high mannose-type glycochains. This N-glycan processing regulates channel trafficking and gating kinetics. Palmitoylated by ZDHHC3, ZDHHC20 and possibly ZDHHC7. Palmitoylation regulates voltage-dependent gating of the channel by shifting it toward more depolarized potentials. Predominantly expressed in adult brain. Detected also in retinoic acid-differentiated SH-SY5Y cells. Specifically expressed in circumvallate taste bud cells.

The protein resides in the cell membrane. The protein localises to the endoplasmic reticulum membrane. Its subcellular location is the basolateral cell membrane. It carries out the reaction ATP(in) = ATP(out). The enzyme catalyses Ca(2+)(in) = Ca(2+)(out). It catalyses the reaction Mg(2+)(in) = Mg(2+)(out). The catalysed reaction is Na(+)(in) = Na(+)(out). It carries out the reaction K(+)(in) = K(+)(out). The enzyme catalyses Li(+)(in) = Li(+)(out). It catalyses the reaction Rb(+)(in) = Rb(+)(out). The catalysed reaction is Cs(+)(in) = Cs(+)(out). It carries out the reaction chloride(in) = chloride(out). With respect to regulation, regulated by membrane voltage and extracellular Ca(2+). Inhibited by Gd(3+), ruthenium red, and Zn(2+) and partially inhibited by 2-aminoethoxydiphenyl borate. Functionally, pore-forming subunit of gustatory voltage-gated ion channels required for sensory perception of sweet, bitter and umami tastes. With CALHM3 forms a fast-activating voltage-gated ATP-release channel in type II taste bud cells, ATP acting as a neurotransmitter to activate afferent neural gustatory pathways. Acts both as a voltage-gated and calcium-activated ion channel: mediates neuronal excitability in response to membrane depolarization and low extracellular Ca(2+) concentration. Has poor ion selectivity and forms a wide pore (around 14 Angstroms) that mediates permeation of small ions including Ca(2+), Na(+), K(+) and Cl(-), as well as larger ions such as ATP(4-). Mediates Ca(2+) influx and downstream activation of the ERK1 and ERK2 cascade in neurons. Triggers endoplasmic reticulum stress by reducing the Ca(2+) content of the endoplasmic reticulum. May indirectly control amyloid precursor protein (APP) proteolysis and aggregated amyloid-beta (Abeta) peptides levels in a Ca(2+)-dependent manner. The polypeptide is Calcium homeostasis modulator protein 1 (Homo sapiens (Human)).